Here is a 217-residue protein sequence, read N- to C-terminus: Elongation factor Ts (217 aa).

The involved in Mg(2+) ion dislocation from EF-Tu stretch occupies residues 80–83; sequence TDFV.

Belongs to the EF-Ts family.

Its subcellular location is the cytoplasm. In terms of biological role, associates with the EF-Tu.GDP complex and induces the exchange of GDP to GTP. It remains bound to the aminoacyl-tRNA.EF-Tu.GTP complex up to the GTP hydrolysis stage on the ribosome. The chain is Elongation factor Ts from Carboxydothermus hydrogenoformans (strain ATCC BAA-161 / DSM 6008 / Z-2901).